Here is a 128-residue protein sequence, read N- to C-terminus: Sulfurtransferase TusD (128 aa).

Cys-78 (cysteine persulfide intermediate) is an active-site residue.

The protein belongs to the DsrE/TusD family. As to quaternary structure, heterohexamer, formed by a dimer of trimers. The hexameric TusBCD complex contains 2 copies each of TusB, TusC and TusD. The TusBCD complex interacts with TusE.

It is found in the cytoplasm. Its function is as follows. Part of a sulfur-relay system required for 2-thiolation of 5-methylaminomethyl-2-thiouridine (mnm(5)s(2)U) at tRNA wobble positions. Accepts sulfur from TusA and transfers it in turn to TusE. In Escherichia coli O139:H28 (strain E24377A / ETEC), this protein is Sulfurtransferase TusD.